The following is a 329-amino-acid chain: Phosphatidylcholine:ceramide cholinephosphotransferase 3 (329 aa).

The Cytoplasmic portion of the chain corresponds to 1–26; it reads MAVPPVEMYSGSFWNRMRKPLPLRTQ. A helical membrane pass occupies residues 27-47; the sequence is VIRFTVVFVIVSFILAVALQI. The Extracellular segment spans residues 48-74; sequence THERMPDPKVTKPLPDLGFELLTKVPG. A helical membrane pass occupies residues 75–95; it reads MYVLADCCIGFLNILSVFTAF. Topologically, residues 96-147 are cytoplasmic; the sequence is KLYLLHRHCVGSGEPELPCNIPGVSRFFLSVWLCKENCRIELRNIHTIAWIR. A helical transmembrane segment spans residues 148–168; it reads FITSYALLLLFRSAVIVMTSL. The Extracellular segment spans residues 169 to 211; the sequence is PAPDDLCQNPPKIENPVKNVILTVLTAGAGSIHCGDLMYSGHT. The chain crosses the membrane as a helical span at residues 212-232; sequence VILTLHLMFHWIYGAMVHWSF. A topological domain (cytoplasmic) is located at residue Arg233. A helical membrane pass occupies residues 234 to 254; that stretch reads PVVTVVAIFGYYCIVASRFHY. At 255–257 the chain is on the extracellular side; it reads TDD. A helical membrane pass occupies residues 258-278; it reads VLVAIYLTIATFIAVGHNADG. The Cytoplasmic portion of the chain corresponds to 279–329; sequence APWQLQLFIRWWPCCGANSREVTEDSQPVMVAFKSEAAGQSSRKVVDERNH.

This sequence belongs to the sphingomyelin synthase family.

It is found in the membrane. The catalysed reaction is an N-acylsphing-4-enine + a 1,2-diacyl-sn-glycero-3-phosphocholine = a sphingomyelin + a 1,2-diacyl-sn-glycerol. It carries out the reaction an N-acylsphinganine + a 1,2-diacyl-sn-glycero-3-phosphocholine = an N-acylsphinganine-1-phosphocholine + a 1,2-diacyl-sn-glycerol. The enzyme catalyses an N-acylsphing-4-enine + a 1,2-diacyl-sn-glycero-3-phosphoethanolamine = an N-acylsphing-4-enine 1-phosphoethanolamine + a 1,2-diacyl-sn-glycerol. It catalyses the reaction an N-acylsphinganine + a 1,2-diacyl-sn-glycero-3-phosphoethanolamine = an N-acylsphinganine-1-phosphoethanolamine + a 1,2-diacyl-sn-glycerol. Functionally, bifunctional sphingomyelin (SM)/ethanolamine phosphorylceramide (EPC) synthase with minimal inositol phosphorylceramide (IPC) synthase activity. Specificity is likely to be defined by residues in the lumenal catalytic domain that interact with the polar head groups of the phospholipid donors. SM is synthesized by both stages of the parasite life cycle, bloodstream forms (BSF) and procyclic forms (PCF), by transferring the phosphocholine from a 1,2-diacyl-sn-glycero-3-phosphocholine to an N-acylsphing-4-enine (ceramide) or an N-acylsphinganine (dihydroceramide). Similarly, EPC is synthesized by transferring phosphoethanolamine from a 1,2-diacyl-sn-glycero-3-phosphoethanolamine to ceramide or dihydroceramide by BSF and PCF, while IPC is confined to PCF. The ceramide/dihydroceramide ratios are skewed towards dihydroceramide in PCF parasites and ceramide in BSF parasites, this is likely due to differential expression and/or regulation of dihydroceramide desaturase, the enzyme responsible for converting dihydroceramide to ceramide. This chain is Phosphatidylcholine:ceramide cholinephosphotransferase 3, found in Trypanosoma brucei brucei.